The following is a 400-amino-acid chain: Cytohesin-2 (400 aa).

A coiled-coil region spans residues 10–63 (DLTPEERMELENIRRRKQELLVEIQRLREELSEAMSEVEGLEANEGSKTLQRNR). The SEC7 domain occupies 72–201 (FNMDPKKGIQ…VIMLNTSLHN (130 aa)). The region spanning 259-376 (NPDREGWLLK…WIKSIQAAVS (118 aa)) is the PH domain. A 1,2-diacyl-sn-glycero-3-phospho-(1D-myo-inositol-3,4,5-trisphosphate) contacts are provided by residues 268-276 (KLGGGRVKT), arginine 280, tyrosine 291, arginine 301, lysine 339, asparagine 350, and histidine 351. Residues 387-395 (RKKRISVKK) are C-terminal autoinhibitory region.

Heteromer. Composed of TAMALIN, CYTH2 and at least one GRM1. Interacts with ARRB1. Interacts with ARL4D; the interaction is direct. Directly interacts with CCDC120 through the coiled coil domain; this interaction stabilizes CCDC120, possibly by preventing its ubiquitination, and is required for neurite growth in neuroblastoma cells. Interacts with ARF1. Interacts with FRMD4A. Interacts (via N-terminal domain) with INAVA (via N-terminal domain). Widely expressed.

The protein localises to the cell membrane. It localises to the cytoplasm. It is found in the cell projection. The protein resides in the growth cone. Its subcellular location is the cell junction. The protein localises to the tight junction. It localises to the adherens junction. Functionally, acts as a guanine-nucleotide exchange factor (GEF). Promotes guanine-nucleotide exchange on ARF1, ARF3 and ARF6. Activates ARF factors through replacement of GDP with GTP. The cell membrane form, in association with ARL4 proteins, recruits ARF6 to the plasma membrane. Involved in neurite growth. This is Cytohesin-2 from Homo sapiens (Human).